Reading from the N-terminus, the 86-residue chain is Protein Tat (86 aa).

An interaction with human CREBBP region spans residues 1–24 (MEPVDPRLEPWKHPGSQPKTACTN). Residues 1–48 (MEPVDPRLEPWKHPGSQPKTACTNCYCKKCCFHCQVCFITKALGISYG) form a transactivation region. Zn(2+) is bound by residues Cys22, Cys25, and Cys27. The interval 22–37 (CTNCYCKKCCFHCQVC) is cysteine-rich. N6-acetyllysine; by host PCAF is present on Lys28. 4 residues coordinate Zn(2+): Cys30, His33, Cys34, and Cys37. The interval 38-48 (FITKALGISYG) is core. Over residues 48–58 (GRKKRRQRRRA) the composition is skewed to basic residues. The segment at 48-86 (GRKKRRQRRRAPQGSQTHQVSLSKQPTSQSRGDPTGPKE) is disordered. The Nuclear localization signal, RNA-binding (TAR), and protein transduction signature appears at 49 to 57 (RKKRRQRRR). Residues 49-86 (RKKRRQRRRAPQGSQTHQVSLSKQPTSQSRGDPTGPKE) are interaction with the host capping enzyme RNGTT. Residues Lys50 and Lys51 each carry the N6-acetyllysine; by host EP300 and GCN5L2 modification. Residues Arg52 and Arg53 each carry the asymmetric dimethylarginine; by host PRMT6 modification. A compositionally biased stretch (polar residues) spans 60 to 79 (QGSQTHQVSLSKQPTSQSRG). Lys71 participates in a covalent cross-link: Glycyl lysine isopeptide (Lys-Gly) (interchain with G-Cter in ubiquitin). The Cell attachment site motif lies at 78–80 (RGD).

This sequence belongs to the lentiviruses Tat family. As to quaternary structure, interacts with host CCNT1. Associates with the P-TEFb complex composed at least of Tat, P-TEFb (CDK9 and CCNT1), TAR RNA, RNA Pol II. Recruits the HATs CREBBP, TAF1/TFIID, EP300, PCAF and GCN5L2. Interacts with host KAT5/Tip60; this interaction targets the latter to degradation. Interacts with the host deacetylase SIRT1. Interacts with host capping enzyme RNGTT; this interaction stimulates RNGTT. Binds to host KDR, and to the host integrins ITGAV/ITGB3 and ITGA5/ITGB1. Interacts with host KPNB1/importin beta-1 without previous binding to KPNA1/importin alpha-1. Interacts with EIF2AK2. Interacts with host nucleosome assembly protein NAP1L1; this interaction may be required for the transport of Tat within the nucleus, since the two proteins interact at the nuclear rim. Interacts with host C1QBP/SF2P32; this interaction involves lysine-acetylated Tat. Interacts with the host chemokine receptors CCR2, CCR3 and CXCR4. Interacts with host DPP4/CD26; this interaction may trigger an anti-proliferative effect. Interacts with host LDLR. Interacts with the host extracellular matrix metalloproteinase MMP1. Interacts with host PRMT6; this interaction mediates Tat's methylation. Interacts with, and is ubiquitinated by MDM2/Hdm2. Interacts with host PSMC3 and HTATIP2. Interacts with STAB1; this interaction may overcome SATB1-mediated repression of IL2 and IL2RA (interleukin) in T cells by binding to the same domain than HDAC1. Interacts (when acetylated) with human CDK13, thereby increasing HIV-1 mRNA splicing and promoting the production of the doubly spliced HIV-1 protein Nef. Interacts with host TBP; this interaction modulates the activity of transcriptional pre-initiation complex. Interacts with host RELA. Interacts with host PLSCR1; this interaction negatively regulates Tat transactivation activity by altering its subcellular distribution. In terms of processing, asymmetrical arginine methylation by host PRMT6 seems to diminish the transactivation capacity of Tat and affects the interaction with host CCNT1. Acetylation by EP300, CREBBP, GCN5L2/GCN5 and PCAF regulates the transactivation activity of Tat. EP300-mediated acetylation of Lys-50 promotes dissociation of Tat from the TAR RNA through the competitive binding to PCAF's bromodomain. In addition, the non-acetylated Tat's N-terminus can also interact with PCAF. PCAF-mediated acetylation of Lys-28 enhances Tat's binding to CCNT1. Lys-50 is deacetylated by SIRT1. Post-translationally, polyubiquitination by host MDM2 does not target Tat to degradation, but activates its transactivation function and fosters interaction with CCNT1 and TAR RNA. In terms of processing, phosphorylated by EIF2AK2 on serine and threonine residues adjacent to the basic region important for TAR RNA binding and function. Phosphorylation of Tat by EIF2AK2 is dependent on the prior activation of EIF2AK2 by dsRNA.

It is found in the host nucleus. Its subcellular location is the host nucleolus. The protein localises to the host cytoplasm. The protein resides in the secreted. Its function is as follows. Transcriptional activator that increases RNA Pol II processivity, thereby increasing the level of full-length viral transcripts. Recognizes a hairpin structure at the 5'-LTR of the nascent viral mRNAs referred to as the transactivation responsive RNA element (TAR) and recruits the cyclin T1-CDK9 complex (P-TEFb complex) that will in turn hyperphosphorylate the RNA polymerase II to allow efficient elongation. The CDK9 component of P-TEFb and other Tat-activated kinases hyperphosphorylate the C-terminus of RNA Pol II that becomes stabilized and much more processive. Other factors such as HTATSF1/Tat-SF1, SUPT5H/SPT5, and HTATIP2 are also important for Tat's function. Besides its effect on RNA Pol II processivity, Tat induces chromatin remodeling of proviral genes by recruiting the histone acetyltransferases (HATs) CREBBP, EP300 and PCAF to the chromatin. This also contributes to the increase in proviral transcription rate, especially when the provirus integrates in transcriptionally silent region of the host genome. To ensure maximal activation of the LTR, Tat mediates nuclear translocation of NF-kappa-B by interacting with host RELA. Through its interaction with host TBP, Tat may also modulate transcription initiation. Tat can reactivate a latently infected cell by penetrating in it and transactivating its LTR promoter. In the cytoplasm, Tat is thought to act as a translational activator of HIV-1 mRNAs. Extracellular circulating Tat can be endocytosed by surrounding uninfected cells via the binding to several surface receptors such as CD26, CXCR4, heparan sulfate proteoglycans (HSPG) or LDLR. Neurons are rarely infected, but they internalize Tat via their LDLR. Through its interaction with nuclear HATs, Tat is potentially able to control the acetylation-dependent cellular gene expression. Modulates the expression of many cellular genes involved in cell survival, proliferation or in coding for cytokines or cytokine receptors. Tat plays a role in T-cell and neurons apoptosis. Tat induced neurotoxicity and apoptosis probably contribute to neuroAIDS. Circulating Tat also acts as a chemokine-like and/or growth factor-like molecule that binds to specific receptors on the surface of the cells, affecting many cellular pathways. In the vascular system, Tat binds to ITGAV/ITGB3 and ITGA5/ITGB1 integrins dimers at the surface of endothelial cells and competes with bFGF for heparin-binding sites, leading to an excess of soluble bFGF. This Human immunodeficiency virus type 1 group M subtype B (isolate PCV12) (HIV-1) protein is Protein Tat.